The sequence spans 571 residues: Sulfite reductase [NADPH] hemoprotein beta-component (571 aa).

[4Fe-4S] cluster-binding residues include cysteine 435, cysteine 441, cysteine 480, and cysteine 484. Cysteine 484 is a binding site for siroheme.

Belongs to the nitrite and sulfite reductase 4Fe-4S domain family. In terms of assembly, alpha(8)-beta(8). The alpha component is a flavoprotein, the beta component is a hemoprotein. The cofactor is siroheme. [4Fe-4S] cluster is required as a cofactor.

The catalysed reaction is hydrogen sulfide + 3 NADP(+) + 3 H2O = sulfite + 3 NADPH + 4 H(+). It functions in the pathway sulfur metabolism; hydrogen sulfide biosynthesis; hydrogen sulfide from sulfite (NADPH route): step 1/1. Component of the sulfite reductase complex that catalyzes the 6-electron reduction of sulfite to sulfide. This is one of several activities required for the biosynthesis of L-cysteine from sulfate. The polypeptide is Sulfite reductase [NADPH] hemoprotein beta-component (Musicola paradisiaca (strain Ech703) (Dickeya paradisiaca)).